The chain runs to 2016 residues: Sodium channel protein type 5 subunit alpha (2016 aa).

The Cytoplasmic segment spans residues 1–129 (MANFLLPRGT…IRRAAVKILV (129 aa)). A disordered region spans residues 28-56 (MAEKQARGSTTLQESREGLPEEEAPRPQL). A Phosphoserine modification is found at serine 36. Threonine 38 bears the Phosphothreonine mark. Residues 41–52 (ESREGLPEEEAP) show a composition bias toward basic and acidic residues. Residues 113–420 (VLSPFHPIRR…VVAMAYEEQN (308 aa)) form an I repeat. Residues 130 to 149 (HSLFNMLIMCTILTNCVFMA) form a helical membrane-spanning segment. The Extracellular portion of the chain corresponds to 150 to 157 (QHDPPPWT). The helical transmembrane segment at 158 to 179 (KYVEYTFTAIYTFESLVKILAR) threads the bilayer. Residues 180-188 (GFCLHAFTF) lie on the Cytoplasmic side of the membrane. A helical membrane pass occupies residues 189-209 (LRDPWNWLDFSVIIMAYTTEF). The Extracellular portion of the chain corresponds to 210–216 (VDLGNVS). An N-linked (GlcNAc...) asparagine glycan is attached at asparagine 214. A helical transmembrane segment spans residues 217–236 (ALRTFRVLRALKTISVISGL). At 237 to 249 (KTIVGALIQSVKK) the chain is on the cytoplasmic side. The chain crosses the membrane as a helical span at residues 250–272 (LADVMVLTVFCLSVFALIGLQLF). Topologically, residues 273–357 (MGNLRHKCVR…PDHGYTSFDS (85 aa)) are extracellular. A disulfide bond links cysteine 280 and cysteine 335. Residues asparagine 283, asparagine 288, asparagine 291, asparagine 318, and asparagine 328 are each glycosylated (N-linked (GlcNAc...) asparagine). An intramembrane region (pore-forming) is located at residues 358-378 (FAWAFLALFRLMTQDCWERLY). Residues 379–386 (QQTLRSAG) are Extracellular-facing. The helical transmembrane segment at 387 to 413 (KIYMIFFMLVIFLGSFYLVNLILAVVA) threads the bilayer. Residues 414–719 (MAYEEQNQAT…VKLVVMDPFT (306 aa)) are Cytoplasmic-facing. Serine 457, serine 460, serine 483, and serine 484 each carry phosphoserine. Positions 461-591 (LEMSPLAPVN…APGHALHGKK (131 aa)) are disordered. A Phosphothreonine modification is found at threonine 486. Basic and acidic residues predominate over residues 491–503 (EDRLPKSDSEDGP). A phosphoserine mark is found at serine 497 and serine 510. The span at 509-528 (LSLTRGLSRTSMKPRSSRGS) shows a compositional bias: polar residues. 2 positions are modified to dimethylated arginine; alternate: arginine 513 and arginine 526. Omega-N-methylarginine; alternate occurs at positions 513 and 526. Phosphoserine occurs at positions 539, 571, 664, and 667. Positions 570–580 (TSAQGQPSPGT) are enriched in polar residues. Arginine 680 bears the Dimethylated arginine; alternate mark. Arginine 680 carries the omega-N-methylarginine; alternate modification. One copy of the II repeat lies at 699 to 969 (CCPLWMSIKQ…QLALARIQRG (271 aa)). A helical membrane pass occupies residues 720–737 (DLTITMCIVLNTLFMALE). Residues 738–746 (HYNMTSEFE) are Extracellular-facing. Asparagine 740 carries an N-linked (GlcNAc...) asparagine glycan. Residues 747–769 (EMLQVGNLVFTGIFTAEMTFKII) form a helical membrane-spanning segment. Topologically, residues 770-775 (ALDPYY) are cytoplasmic. Residues 776–796 (YFQQGWNIFDSIIVILSLMEL) traverse the membrane as a helical segment. At 797–806 (GLSRMSNLSV) the chain is on the extracellular side. Asparagine 803 is a glycosylation site (N-linked (GlcNAc...) asparagine). Residues 807–821 (LRSFRLLRVFKLAKS) form a helical membrane-spanning segment. Residues 822 to 838 (WPTLNTLIKIIGNSVGA) are Cytoplasmic-facing. The chain crosses the membrane as a helical span at residues 839–860 (LGNLTLVLAIIVFIFAVVGMQL). Residues 861 to 884 (FGKNYSELRDSDSGLLPRWHMMDF) lie on the Extracellular side of the membrane. Asparagine 864 carries N-linked (GlcNAc...) asparagine glycosylation. An intramembrane region (pore-forming) is located at residues 885 to 903 (FHAFLIIFRILCGEWIETM). Residues 904-912 (WDCMEVSGQ) lie on the Extracellular side of the membrane. The cysteines at positions 906 and 915 are disulfide-linked. Residues 913–941 (SLCLLVFLLVMVIGNLVVLNLFLALLLSS) traverse the membrane as a helical segment. Residues 942–1203 (FSADNLTAPD…LRKTCYHIVE (262 aa)) are Cytoplasmic-facing. The disordered stretch occupies residues 1005 to 1141 (IATPYSPPPP…PEDSCSEGST (137 aa)). The segment covering 1015-1030 (ETEKVPPTRKETRFEE) has biased composition (basic and acidic residues). Residues 1033–1044 (QPGQGTPGDPEP) show a composition bias toward low complexity. A compositionally biased stretch (acidic residues) spans 1054–1071 (SDTDDQEEDEENSLGTEE). The span at 1096–1113 (SQVSATASSEAEASASQA) shows a compositional bias: low complexity. The III repeat unit spans residues 1187–1501 (PGKVWWRLRK…KKYYNAMKKL (315 aa)). Residues 1204-1225 (HSWFETFIIFMILLSSGALAFE) traverse the membrane as a helical segment. At 1226–1236 (DIYLEERKTIK) the chain is on the extracellular side. Residues 1237 to 1259 (VLLEYADKMFTYVFVLEMLLKWV) form a helical membrane-spanning segment. Topologically, residues 1260–1268 (AYGFKKYFT) are cytoplasmic. A helical membrane pass occupies residues 1269–1291 (NAWCWLDFLIVDVSLVSLVANTL). At 1292-1297 (GFAEMG) the chain is on the extracellular side. Residues 1298-1317 (PIKSLRTLRALRPLRALSRF) form a helical membrane-spanning segment. Topologically, residues 1318 to 1330 (EGMRVVVNALVGA) are cytoplasmic. A helical transmembrane segment spans residues 1331-1355 (IPSIMNVLLVCLIFWLIFSIMGVNL). Residues 1356–1400 (FAGKFGRCINQTEGDLPLNYTIVNNKSQCESLNLTGELYWTKVKV) are Extracellular-facing. 4 N-linked (GlcNAc...) asparagine glycosylation sites follow: asparagine 1365, asparagine 1374, asparagine 1380, and asparagine 1388. The pore-forming intramembrane region spans 1401–1422 (NFDNVGAGYLALLQVATFKGWM). Over 1423 to 1445 (DIMYAAVDSRGYEEQPQWEYNLY) the chain is Extracellular. A helical membrane pass occupies residues 1446 to 1470 (MYIYFVIFIIFGSFFTLNLFIGVII). The Cytoplasmic portion of the chain corresponds to 1471–1528 (DNFNQQKKKLGGQDIFMTEEQKKYYNAMKKLGSKKPQKPIPRPLNKYQGFIFDIVTKQ). Phosphoserine; by PKC is present on serine 1503. Residues 1510 to 1807 (IPRPLNKYQG…WEKFDPEATQ (298 aa)) form an IV repeat. Residues 1529–1547 (AFDVTIMFLICLNMVTMMV) traverse the membrane as a helical segment. The Extracellular segment spans residues 1548–1558 (ETDDQSPEKIN). The helical transmembrane segment at 1559–1580 (ILAKINLLFVAIFTGECIVKLA) threads the bilayer. Residues 1581 to 1589 (ALRHYYFTN) lie on the Cytoplasmic side of the membrane. The helical transmembrane segment at 1590 to 1612 (SWNIFDFVVVILSIVGTVLSDII) threads the bilayer. The Extracellular portion of the chain corresponds to 1613–1619 (QKYFFSP). Residues 1620 to 1640 (TLFRVIRLARIGRILRLIRGA) traverse the membrane as a helical segment. At 1641–1650 (KGIRTLLFAL) the chain is on the cytoplasmic side. The helical transmembrane segment at 1651–1679 (MMSLPALFNIGLLLFLVMFIYSIFGMANF) threads the bilayer. Residues 1680-1697 (AYVKWEAGIDDMFNFQTF) lie on the Extracellular side of the membrane. Residues 1698–1714 (ANSMLCLFQITTSAGWD) constitute an intramembrane region (pore-forming). Over 1715–1745 (GLLSPILNTGPPYCDPTLPNSNGSRGDCGSP) the chain is Extracellular. The N-linked (GlcNAc...) asparagine glycan is linked to asparagine 1736. A helical membrane pass occupies residues 1746-1771 (AVGILFFTTYIIISFLIVVNMYIAII). Residues 1772-2016 (LENFSVATEE…SPDRDRESIV (245 aa)) are Cytoplasmic-facing. The interaction with FGF13 stretch occupies residues 1839–1901 (DLPMVSGDRI…ITTTLRRKHE (63 aa)). Positions 1901 to 1930 (EEVSAMVIQRAFRRHLLQRSLKHASFLFRQ) constitute an IQ domain. The span at 1959–1979 (PLGPPSSSSISSTSFPPSYDS) shows a compositional bias: low complexity. A disordered region spans residues 1959 to 2016 (PLGPPSSSSISSTSFPPSYDSVTRATSDNLQVRGSDYSHSEDLADFPPSPDRDRESIV). The interaction with NEDD4, NEDD4L and WWP2 stretch occupies residues 1974–1977 (PPSY). Over residues 1981-1990 (TRATSDNLQV) the composition is skewed to polar residues.

Belongs to the sodium channel (TC 1.A.1.10) family. Nav1.5/SCN5A subfamily. Cannot form the same regulatory interactions with beta subunits as other Navs do. Interacts with the PDZ domain of the syntrophin SNTA1, SNTB1 and SNTB2. Interacts with NEDD4, NEDD4L, WWP2 and GPD1L. Interacts with CALM. Interacts with FGF13; the interaction is direct and FGF13 may regulate SNC5A density at membranes and function. May also interact with FGF12 and FGF14. Interacts with TMEM233. Interacts with the spider Jingzhaotoxin-I (AC P83974, AC B1P1B7, AC B1P1B8). Interacts with ANK3. Interacts with PKP2 (via N-terminus). Interacts with XIRP2; the interaction is required for normal action potential configuration in the heart. Post-translationally, ubiquitinated by NEDD4L; which promotes its endocytosis. Does not seem to be ubiquitinated by NEDD4 or WWP2. In terms of processing, phosphorylation at Ser-1503 by PKC in a highly conserved cytoplasmic loop slows inactivation of the sodium channel and reduces peak sodium currents. Regulated through phosphorylation by CaMK2D. Lacks the cysteine which covalently binds the conotoxin GVIIJ. This cysteine (position 868) is speculated in other sodium channel subunits alpha to be implied in covalent binding with the sodium channel subunit beta-2 or beta-4. Post-translationally, N-glycosylated at Asn-318, probably hinders potential interaction with regulatory subunits. As to expression, found in jejunal circular smooth muscle cells (at protein level). Expressed in human atrial and ventricular cardiac muscle but not in adult skeletal muscle, brain, myometrium, liver, or spleen. Isoform 4 is expressed in brain.

Its subcellular location is the cell membrane. It localises to the cytoplasm. The protein resides in the perinuclear region. The protein localises to the sarcolemma. It is found in the T-tubule. Its subcellular location is the cell junction. It carries out the reaction Na(+)(in) = Na(+)(out). Channel inactivation is regulated by intracellular calcium levels. It is a tetrodotoxin-resistant voltage-gated Na(+) channel (Nav). Functionally, pore-forming subunit of Nav1.5, a voltage-gated sodium (Nav) channel that directly mediates the depolarizing phase of action potentials in excitable membranes. Navs, also called VGSCs (voltage-gated sodium channels) or VDSCs (voltage-dependent sodium channels), operate by switching between closed and open conformations depending on the voltage difference across the membrane. In the open conformation they allow Na(+) ions to selectively pass through the pore, along their electrochemical gradient. The influx of Na(+) ions provokes membrane depolarization, initiating the propagation of electrical signals throughout cells and tissues. Nav1.5 is the predominant sodium channel expressed in myocardial cells and it is responsible for the initial upstroke of the action potential in cardiac myocytes, thereby initiating the heartbeat. Required for normal electrical conduction including formation of the infranodal ventricular conduction system and normal action potential configuration, as a result of its interaction with XIRP2. This Homo sapiens (Human) protein is Sodium channel protein type 5 subunit alpha.